Reading from the N-terminus, the 464-residue chain is V-type ATP synthase beta chain (464 aa).

Belongs to the ATPase alpha/beta chains family.

In terms of biological role, produces ATP from ADP in the presence of a proton gradient across the membrane. The V-type beta chain is a regulatory subunit. The sequence is that of V-type ATP synthase beta chain from Streptococcus sanguinis (strain SK36).